A 218-amino-acid chain; its full sequence is Adenylate kinase (218 aa).

10-15 is a binding site for ATP; sequence GAGKGT. An NMP region spans residues 30-59; that stretch reads STGDMLRNAAKEGKPLGLEAKKIMDAGQLV. Residues T31, R36, 57–59, 85–88, and Q92 each bind AMP; these read QLV and GFPR. The LID stretch occupies residues 122 to 159; that stretch reads GRRVHLASGRSYHVMFNPPKQEGLDDATGEPLVQRADD. Residues R123 and 132–133 each bind ATP; that span reads SY. Positions 156 and 167 each coordinate AMP. G203 provides a ligand contact to ATP.

This sequence belongs to the adenylate kinase family. Monomer.

The protein localises to the cytoplasm. It carries out the reaction AMP + ATP = 2 ADP. It functions in the pathway purine metabolism; AMP biosynthesis via salvage pathway; AMP from ADP: step 1/1. In terms of biological role, catalyzes the reversible transfer of the terminal phosphate group between ATP and AMP. Plays an important role in cellular energy homeostasis and in adenine nucleotide metabolism. In Chlorobium chlorochromatii (strain CaD3), this protein is Adenylate kinase.